The following is a 483-amino-acid chain: PAT complex subunit CCDC47 (483 aa).

An N-terminal signal peptide occupies residues 1 to 20; it reads MKGFHAFCVILLIFGSVSEA. Residues 21–135 are Cytoplasmic-facing; that stretch reads KFDDFEDEED…PAHLQNSWES (115 aa). Residues 44–118 form a disordered region; sequence DVAEDSVTES…PDTSSSKSKD (75 aa). Positions 60–104 are enriched in acidic residues; it reads TEDDEDETTVELEGQDESQEGDFEDADTQEGDTESEPYDDEEFEG. Positions 105–118 are enriched in basic and acidic residues; that stretch reads YEDKPDTSSSKSKD. Residues 136-156 traverse the membrane as a helical segment; the sequence is YYLEILMVTGLLAYIMNYIIG. Residues 157–483 lie on the Lumenal side of the membrane; sequence KNKNSRLAQA…KMKQIKVKAM (327 aa). An N-linked (GlcNAc...) asparagine glycan is attached at N178. Positions 424–483 are disordered; the sequence is QRQEAAQSRREEKKRAEKERIMNEEDPEKQRRLEEAALRREQKKLEKKQMKMKQIKVKAM. The segment covering 430–472 has biased composition (basic and acidic residues); the sequence is QSRREEKKRAEKERIMNEEDPEKQRRLEEAALRREQKKLEKKQ. Residues 450 to 483 adopt a coiled-coil conformation; it reads PEKQRRLEEAALRREQKKLEKKQMKMKQIKVKAM. Residues 473-483 show a composition bias toward basic residues; sequence MKMKQIKVKAM.

It belongs to the CCDC47 family. In terms of assembly, component of the PAT complex, composed of WDR83OS/Asterix and CCDC47. The PAT complex is part of the multi-pass translocon (MPT) complex, composed of three subcomplexes, the GEL complex (composed of RAB5IF/OPTI and TMCO1), the BOS complex (composed of NCLN/Nicalin, NOMO1 and TMEM147) and the PAT complex (composed of WDR83OS/Asterix and CCDC47). The MPT complex associates with the SEC61 complex. Interacts with VCP, HSPA5, DERL1, DERL2 and SELENOS.

Its subcellular location is the endoplasmic reticulum membrane. It localises to the rough endoplasmic reticulum membrane. Functionally, component of the multi-pass translocon (MPT) complex that mediates insertion of multi-pass membrane proteins into the lipid bilayer of membranes. The MPT complex takes over after the SEC61 complex: following membrane insertion of the first few transmembrane segments of proteins by the SEC61 complex, the MPT complex occludes the lateral gate of the SEC61 complex to promote insertion of subsequent transmembrane regions. Within the MPT complex, the PAT subcomplex sequesters any highly polar regions in the transmembrane domains away from the non-polar membrane environment until they can be buried in the interior of the fully assembled protein. Within the PAT subcomplex, CCDC47 occludes the lateral gate of the SEC61 complex. Involved in the regulation of calcium ion homeostasis in the ER. Required for proper protein degradation via the ERAD (ER-associated degradation) pathway. Has an essential role in the maintenance of ER organization during embryogenesis. This Bos taurus (Bovine) protein is PAT complex subunit CCDC47 (CCDC47).